The sequence spans 174 residues: Peptide deformylase (174 aa).

Residues cysteine 96 and histidine 138 each coordinate Fe cation. Glutamate 139 is a catalytic residue. Fe cation is bound at residue histidine 142.

Belongs to the polypeptide deformylase family. It depends on Fe(2+) as a cofactor.

The catalysed reaction is N-terminal N-formyl-L-methionyl-[peptide] + H2O = N-terminal L-methionyl-[peptide] + formate. Functionally, removes the formyl group from the N-terminal Met of newly synthesized proteins. Requires at least a dipeptide for an efficient rate of reaction. N-terminal L-methionine is a prerequisite for activity but the enzyme has broad specificity at other positions. The protein is Peptide deformylase of Helicobacter pylori (strain G27).